A 335-amino-acid chain; its full sequence is Anthranilate phosphoribosyltransferase (335 aa).

5-phospho-alpha-D-ribose 1-diphosphate is bound by residues Gly-79, 82-83, Thr-87, 89-92, 107-115, and Ser-119; these read GD, NIST, and KHCNQGVSS. Gly-79 contributes to the anthranilate binding site. Ser-91 lines the Mg(2+) pocket. Asn-110 lines the anthranilate pocket. Arg-165 contributes to the anthranilate binding site. Mg(2+) contacts are provided by Asp-223 and Glu-224.

The protein belongs to the anthranilate phosphoribosyltransferase family. In terms of assembly, homodimer. It depends on Mg(2+) as a cofactor.

The catalysed reaction is N-(5-phospho-beta-D-ribosyl)anthranilate + diphosphate = 5-phospho-alpha-D-ribose 1-diphosphate + anthranilate. The protein operates within amino-acid biosynthesis; L-tryptophan biosynthesis; L-tryptophan from chorismate: step 2/5. In terms of biological role, catalyzes the transfer of the phosphoribosyl group of 5-phosphorylribose-1-pyrophosphate (PRPP) to anthranilate to yield N-(5'-phosphoribosyl)-anthranilate (PRA). The polypeptide is Anthranilate phosphoribosyltransferase (Buchnera aphidicola subsp. Diuraphis noxia).